Here is a 330-residue protein sequence, read N- to C-terminus: Ferredoxin--NADP reductase (330 aa).

FAD contacts are provided by Glu-34, Gln-42, Tyr-47, Val-87, Phe-121, Asp-285, and Ser-325.

It belongs to the ferredoxin--NADP reductase type 2 family. Homodimer. FAD is required as a cofactor.

The catalysed reaction is 2 reduced [2Fe-2S]-[ferredoxin] + NADP(+) + H(+) = 2 oxidized [2Fe-2S]-[ferredoxin] + NADPH. This Limosilactobacillus fermentum (strain NBRC 3956 / LMG 18251) (Lactobacillus fermentum) protein is Ferredoxin--NADP reductase.